Reading from the N-terminus, the 359-residue chain is Glucose 1-dehydrogenase (359 aa).

Cys-39 lines the Zn(2+) pocket. Residue Thr-41 participates in substrate binding. Residues His-64 and Glu-65 each coordinate Zn(2+). Residues Glu-116 and Glu-152 each coordinate substrate. A Zn(2+)-binding site is contributed by Glu-152. Residue 183–186 (AGPI) participates in NADP(+) binding.

This sequence belongs to the zinc-containing alcohol dehydrogenase family. Glucose 1-dehydrogenase subfamily. It depends on Zn(2+) as a cofactor.

It carries out the reaction D-glucose + NAD(+) = D-glucono-1,5-lactone + NADH + H(+). The enzyme catalyses D-glucose + NADP(+) = D-glucono-1,5-lactone + NADPH + H(+). Catalyzes the NAD(P)(+)-dependent oxidation of D-glucose to D-gluconate via gluconolactone. Can utilize both NAD(+) and NADP(+) as electron acceptor. Is involved in the degradation of glucose through a non-phosphorylative variant of the Entner-Doudoroff pathway. The polypeptide is Glucose 1-dehydrogenase (Methanocella arvoryzae (strain DSM 22066 / NBRC 105507 / MRE50)).